Consider the following 289-residue polypeptide: Survival motor neuron protein (289 aa).

Gly residues predominate over residues 1 to 10 (MAMGSGGGAG). The disordered stretch occupies residues 1-27 (MAMGSGGGAGSEQEDTVLFRRGTGQSD). A P1 (binding site for GEMIN2) region spans residues 11–42 (SEQEDTVLFRRGTGQSDDSDIWDDTALIKAYD). Thr23 carries the post-translational modification Phosphothreonine. A phosphoserine mark is found at Ser26 and Ser29. A Glycyl lysine isopeptide (Lys-Gly) (interchain with G-Cter in SUMO2) cross-link involves residue Lys49. The tract at residues 55–88 (GDMCETSDKPKGTARRKPAKKNKNQKKNATAPLK) is disordered. Over residues 66–80 (GTARRKPAKKNKNQK) the composition is skewed to basic residues. Thr67 carries the post-translational modification Phosphothreonine. The Tudor domain occupies 89 to 149 (QWKAGDKCSA…LSPTCEVANN (61 aa)). The required for interaction with RPP20/POP7 stretch occupies residues 95–205 (KCSAVWSEDG…VPGAGLGPGK (111 aa)). Residues 150–226 (TEQNTQENES…PPPPPPFLPC (77 aa)) are disordered. The span at 171–181 (RSLRSKAHSKS) shows a compositional bias: basic residues. Residue Lys205 forms a Glycyl lysine isopeptide (Lys-Gly) (interchain with G-Cter in SUMO2) linkage. Over residues 212–226 (GPPPPPPPPPPFLPC) the composition is skewed to pro residues. The interval 235–262 (PPIIPPPPPISPDCLDDTDALGSMLISW) is P2 (binding site for SM B). A required for interaction with SYNCRIP region spans residues 274-289 (GFRQNKKEGKKCSHTN).

It belongs to the SMN family. In terms of assembly, homooligomer; may form higher order homooligomers in the dimer to octamer range. Part of the core SMN complex that contains SMN1, GEMIN2/SIP1, DDX20/GEMIN3, GEMIN4, GEMIN5, GEMIN6, GEMIN7, GEMIN8 and STRAP/UNRIP. Part of the SMN-Sm complex that contains SMN1, GEMIN2/SIP1, DDX20/GEMIN3, GEMIN4, GEMIN5, GEMIN6, GEMIN7, GEMIN8, STRAP/UNRIP and the Sm proteins SNRPB, SNRPD1, SNRPD2, SNRPD3, SNRPE, SNRPF and SNRPG. Component of an import snRNP complex composed of KPNB1, RNUT1, SMN1 and ZNF259. Interacts with DDX20, FBL, NOLA1, RNUT1 and with several spliceosomal snRNP core Sm proteins, including SNRPB, SNRPD1, SNRPD2, SNRPD3, SNRPE and ILF3. Interacts with GEMIN2; the interaction is direct. Interacts with GEMIN3; the interaction is direct. Interacts with GEMIN8; the interaction is direct. Interacts with SNRPB; the interaction is direct. Interacts (via Tudor domain) with SNRPD1 (via C-terminus); the interaction is direct. Interacts with SNRPD2; the interaction is direct. Interacts (via Tudor domain) with SNRPD3 (via C-terminus); the interaction is direct. Interacts with SNRPE; the interaction is direct. Interacts with OSTF1, LSM10, LSM11 and RPP20/POP7. Interacts (via C-terminal region) with ZPR1 (via C-terminal region). Interacts (via Tudor domain) with COIL. Interacts with SETX; recruits SETX to POLR2A. Interacts with POLR2A (via the C-terminal domain (CTD)). Interacts with PRMT5. Interacts with XRN2. Interacts (via C-terminus) with FMR1 (via C-terminus); the interaction is direct and occurs in a RNA-independent manner. Interacts with SYNCRIP. Interacts (via Tudor domain) with SF3B2 (methylated form). Interacts with WRAP53/TCAB1. Interacts (via Tudor domain) with ELAVL4 in an RNA-independent manner; the interaction is required for localization of ELAVL4 to RNA granules. Interacts with FRG1.

Its subcellular location is the nucleus. The protein resides in the gem. The protein localises to the cajal body. It localises to the cytoplasm. It is found in the cytoplasmic granule. Its subcellular location is the perikaryon. The protein resides in the cell projection. The protein localises to the neuron projection. It localises to the axon. It is found in the myofibril. Its subcellular location is the sarcomere. The protein resides in the z line. In terms of biological role, the SMN complex catalyzes the assembly of small nuclear ribonucleoproteins (snRNPs), the building blocks of the spliceosome, and thereby plays an important role in the splicing of cellular pre-mRNAs. Most spliceosomal snRNPs contain a common set of Sm proteins SNRPB, SNRPD1, SNRPD2, SNRPD3, SNRPE, SNRPF and SNRPG that assemble in a heptameric protein ring on the Sm site of the small nuclear RNA to form the core snRNP (Sm core). In the cytosol, the Sm proteins SNRPD1, SNRPD2, SNRPE, SNRPF and SNRPG are trapped in an inactive 6S pICln-Sm complex by the chaperone CLNS1A that controls the assembly of the core snRNP. To assemble core snRNPs, the SMN complex accepts the trapped 5Sm proteins from CLNS1A forming an intermediate. Binding of snRNA inside 5Sm ultimately triggers eviction of the SMN complex, thereby allowing binding of SNRPD3 and SNRPB to complete assembly of the core snRNP. Within the SMN complex, SMN1 acts as a structural backbone and together with GEMIN2 it gathers the Sm complex subunits. Ensures the correct splicing of U12 intron-containing genes that may be important for normal motor and proprioceptive neurons development. Also required for resolving RNA-DNA hybrids created by RNA polymerase II, that form R-loop in transcription terminal regions, an important step in proper transcription termination. May also play a role in the metabolism of small nucleolar ribonucleoprotein (snoRNPs). In Rattus norvegicus (Rat), this protein is Survival motor neuron protein (Smn1).